Consider the following 385-residue polypeptide: Deoxyguanosinetriphosphate triphosphohydrolase-like protein (385 aa).

The region spanning 75–197 (RLTHTLEVGQ…VDAADALAYT (123 aa)) is the HD domain.

This sequence belongs to the dGTPase family. Type 2 subfamily.

The sequence is that of Deoxyguanosinetriphosphate triphosphohydrolase-like protein from Deinococcus geothermalis (strain DSM 11300 / CIP 105573 / AG-3a).